The following is a 640-amino-acid chain: F-box only protein 43 (640 aa).

A Phosphothreonine modification is found at T176. S275 is modified (phosphoserine). Residues 328–354 (LQEQGQSEDEMQTVHPNSDSGVLESLQ) are disordered. Residues 423-480 (MGIEQLDILTELQYRNLKHILAMVLESLTSESLYSAWNVSRNWREIVAQDKKANRRRK) enclose the F-box domain. Residues 568 to 616 (ALKPCPRCQSPAKYQPHKKRGLCSRLACGFDFCVLCLCAYHGSEDCRRG) form a ZBR-type zinc finger. Zn(2+) is bound by residues C572, C575, C590, C595, C600, C603, H608, and C613. Residues 615–640 (RGSAKARGSKDVLPGSAQSKRNLKRL) form a disordered region.

Part of a SCF (SKP1-cullin-F-box) protein ligase complex. Interaction with SKP1 does not occur. Interacts with ANAPC2; the interaction is direct, ANAPC4, CDC16, CDC23; the interaction is direct, ANAPC10; the interaction is direct and CDC26, during spermatogenesis. Interacts with CDC20. Phosphorylated on Thr-176 and Ser-275 in response to calcium, which is a prerequisite for ubiquitination and proteasomal degradation. In terms of processing, ubiquitinated in response to calcium, which promotes proteasomal degradation. In terms of tissue distribution, present in testis and ovary (at protein level). Expression is high in immature oocytes, and diminishes after oocyte activation. Expressed post-meiotically in spermatids and sperm.

It participates in protein modification; protein ubiquitination. In terms of biological role, required to establish and maintain the arrest of oocytes at the second meiotic metaphase until fertilization. Acts by inhibiting the anaphase-promoting complex/cyclosome (APC/C) ubiquitin ligase. Probably recognizes and binds to some phosphorylated proteins and promotes their ubiquitination and degradation. Plays a vital role in modulating the ubiquitilation of CCNB1 and CDK1 during gametogenesis. The polypeptide is F-box only protein 43 (Fbxo43) (Mus musculus (Mouse)).